We begin with the raw amino-acid sequence, 356 residues long: Phosphoribosyl pyrophosphate synthase-associated protein 1 (356 aa).

Position 1 is an N-acetylmethionine (methionine 1). N-acetylproline is present on asparagine 2. Phosphoserine is present on residues serine 177 and serine 215.

This sequence belongs to the ribose-phosphate pyrophosphokinase family. In terms of assembly, binds to PRPS1 and PRPS2. In terms of tissue distribution, ubiquitous.

In terms of biological role, seems to play a negative regulatory role in 5-phosphoribose 1-diphosphate synthesis. This chain is Phosphoribosyl pyrophosphate synthase-associated protein 1 (PRPSAP1), found in Homo sapiens (Human).